The sequence spans 190 residues: Protein LZIC (190 aa).

Residues 6 to 64 (KSETSKLRQNMEEQLDRLMQQLQDLEECREDLEEEEYEETKKETLEQLSEFNDSLKKLM) adopt a coiled-coil conformation.

The protein belongs to the CTNNBIP1 family. Does not interact with CTNNB1.

Its function is as follows. Required for neuronal survival during early development. This Danio rerio (Zebrafish) protein is Protein LZIC (lzic).